Here is a 140-residue protein sequence, read N- to C-terminus: uncharacterized protein (140 aa).

It to B.subtilis YrhD.

This is an uncharacterized protein from Archaeoglobus fulgidus (strain ATCC 49558 / DSM 4304 / JCM 9628 / NBRC 100126 / VC-16).